The sequence spans 426 residues: MFLRSFLCLLCLLPSILYCADLEIHVRAESSLLPVNVSLLSSPKDTKQGSYLASLRDLFARDLALGDLLAPTKEIAPLTVFIEASYPELIFSIKKDGKGAQKIFSLELSGNPSKDHQSIHEAADRIHFLLTHTPGISSGKIIFSLCSTNSSEELKQGELWSVDYDGQHLAPLTNEHSLSVTPAWMHISHIPAYIYVSYKLGVPKIFLNTLSQPTGKKILAMQGNQFMPAFSPKTKLLAFISDRDGNPDLFVQSFSLATGAIGTPKKLLNEAFGTQGNPSFSPDGTRLVFVSNKDGTPRIYQMQIYPEQHPPRLLTKKYRNSSCPTWSPDGKKIAFCSVIKGVRQICVYDLASGRDEQLTTSAEHKESPSWAADSNHLVYSAGSSSTSELFLLSLITKKSRKIVIGSGEKRFPCWGAFPSQHIKKAS.

An N-terminal signal peptide occupies residues 1–19 (MFLRSFLCLLCLLPSILYC).

This sequence belongs to the TolB family.

It is found in the periplasm. The chain is Protein TolB homolog from Chlamydia muridarum (strain MoPn / Nigg).